The following is a 497-amino-acid chain: Protein root UVB sensitive 6 (497 aa).

The protein belongs to the RUS1 family.

Its function is as follows. Required for normal embryo development. The protein is Protein root UVB sensitive 6 of Arabidopsis thaliana (Mouse-ear cress).